A 78-amino-acid chain; its full sequence is Putative membrane protein insertion efficiency factor (78 aa).

This sequence belongs to the UPF0161 family.

The protein localises to the cell membrane. Its function is as follows. Could be involved in insertion of integral membrane proteins into the membrane. The protein is Putative membrane protein insertion efficiency factor of Bacillus thuringiensis subsp. konkukian (strain 97-27).